The following is a 159-amino-acid chain: MNVVQGNIEAKNAKVAIVISRFNSFLVESLLEGALDTLKRFGQVSDDNITVVRVPGAVELPLAARRVAASGKFDGIIALGAVIRGGTPHFDFVAGECNKGLAQVALEFDLPVAFGVLTTDTIEQAIERSGTKAGNKGGEAALSLLEMVNVLQELEQQLL.

5-amino-6-(D-ribitylamino)uracil contacts are provided by residues Phe-22, 57 to 59 (AVE), and 81 to 83 (AVI). 86 to 87 (GT) serves as a coordination point for (2S)-2-hydroxy-3-oxobutyl phosphate. His-89 functions as the Proton donor in the catalytic mechanism. Phe-114 is a binding site for 5-amino-6-(D-ribitylamino)uracil. Arg-128 is a binding site for (2S)-2-hydroxy-3-oxobutyl phosphate.

Belongs to the DMRL synthase family. Forms an icosahedral capsid composed of 60 subunits, arranged as a dodecamer of pentamers.

It carries out the reaction (2S)-2-hydroxy-3-oxobutyl phosphate + 5-amino-6-(D-ribitylamino)uracil = 6,7-dimethyl-8-(1-D-ribityl)lumazine + phosphate + 2 H2O + H(+). It participates in cofactor biosynthesis; riboflavin biosynthesis; riboflavin from 2-hydroxy-3-oxobutyl phosphate and 5-amino-6-(D-ribitylamino)uracil: step 1/2. Its function is as follows. Catalyzes the formation of 6,7-dimethyl-8-ribityllumazine by condensation of 5-amino-6-(D-ribitylamino)uracil with 3,4-dihydroxy-2-butanone 4-phosphate. This is the penultimate step in the biosynthesis of riboflavin. The chain is 6,7-dimethyl-8-ribityllumazine synthase from Shewanella baltica (strain OS155 / ATCC BAA-1091).